Reading from the N-terminus, the 315-residue chain is Tubulin beta-1 chain (315 aa).

The GTP site is built by serine 6, glycine 10, threonine 11, glycine 12, asparagine 72, and asparagine 94. Residues 295 to 315 form a disordered region; sequence DATADEEEYYEDEEEEEAQGM. Residues 297–315 show a composition bias toward acidic residues; the sequence is TADEEEYYEDEEEEEAQGM.

It belongs to the tubulin family. In terms of assembly, dimer of alpha and beta chains. A typical microtubule is a hollow water-filled tube with an outer diameter of 25 nm and an inner diameter of 15 nM. Alpha-beta heterodimers associate head-to-tail to form protofilaments running lengthwise along the microtubule wall with the beta-tubulin subunit facing the microtubule plus end conferring a structural polarity. Microtubules usually have 13 protofilaments but different protofilament numbers can be found in some organisms and specialized cells. It depends on Mg(2+) as a cofactor.

The protein localises to the cytoplasm. It is found in the cytoskeleton. In terms of biological role, tubulin is the major constituent of microtubules, a cylinder consisting of laterally associated linear protofilaments composed of alpha- and beta-tubulin heterodimers. Microtubules grow by the addition of GTP-tubulin dimers to the microtubule end, where a stabilizing cap forms. Below the cap, tubulin dimers are in GDP-bound state, owing to GTPase activity of alpha-tubulin. The polypeptide is Tubulin beta-1 chain (TUBB1) (Daucus carota (Wild carrot)).